We begin with the raw amino-acid sequence, 98 residues long: MKGQDVTLKNVAVELEDVVSPIILDCEEEIETEEVDCPAPYAVEAVCYVCENPLRLALVSSPDGIHQLHQLLLDCISLLCANCSREVYSNRRPQRNGP.

The segment at 1 to 37 (MKGQDVTLKNVAVELEDVVSPIILDCEEEIETEEVDC) is E7 terminal domain. The short motif at 24 to 28 (LDCEE) is the LXCXE motif; interaction with host RB1 and TMEM173/STING element. Residues 47-83 (CYVCENPLRLALVSSPDGIHQLHQLLLDCISLLCANC) fold into a zinc finger. The Nuclear export signal signature appears at 65 to 73 (IHQLHQLLL).

Belongs to the papillomaviridae E7 protein family. Homodimer. Homooligomer. Interacts with host RB1; this interaction induces dissociation of RB1-E2F1 complex thereby disrupting RB1 activity. Interacts with host EP300; this interaction represses EP300 transcriptional activity. Interacts with protein E2; this interaction inhibits E7 oncogenic activity. Interacts with host TMEM173/STING; this interaction impairs the ability of TMEM173/STING to sense cytosolic DNA and promote the production of type I interferon (IFN-alpha and IFN-beta). Highly phosphorylated.

The protein resides in the host cytoplasm. Its subcellular location is the host nucleus. In terms of biological role, plays a role in viral genome replication by driving entry of quiescent cells into the cell cycle. Stimulation of progression from G1 to S phase allows the virus to efficiently use the cellular DNA replicating machinery to achieve viral genome replication. E7 protein has both transforming and trans-activating activities. Induces the disassembly of the E2F1 transcription factor from RB1, with subsequent transcriptional activation of E2F1-regulated S-phase genes. Interferes with host histone deacetylation mediated by HDAC1 and HDAC2, leading to transcription activation. Also plays a role in the inhibition of both antiviral and antiproliferative functions of host interferon alpha. Interaction with host TMEM173/STING impairs the ability of TMEM173/STING to sense cytosolic DNA and promote the production of type I interferon (IFN-alpha and IFN-beta). This chain is Protein E7, found in Bovine papillomavirus type 3.